The chain runs to 326 residues: Interleukin-1-binding protein (326 aa).

An N-terminal signal peptide occupies residues 1 to 18; sequence MSILPVIFLSIFFYSSFV. Ig-like domains follow at residues 24–115, 122–212, and 221–322; these read PECI…LNLT, SNID…RIVK, and PSTM…KTVT. An intrachain disulfide couples cysteine 48 to cysteine 99. Asparagine 80, asparagine 103, and asparagine 113 each carry an N-linked (GlcNAc...) asparagine; by host glycan. Cysteine 143 and cysteine 194 are oxidised to a cystine. N-linked (GlcNAc...) asparagine; by host glycans are attached at residues asparagine 206 and asparagine 237. Cysteine 242 and cysteine 309 are disulfide-bonded.

It belongs to the interleukin-1 receptor family. As to quaternary structure, interacts with mouse Il1b.

It localises to the secreted. Its function is as follows. May reduce the host inflammatory response by interacting with inteleukin-1 beta (Il1b) and thus decreasing the association between IL1B and its cellular receptor. This is Interleukin-1-binding protein (OPG201) from Vaccinia virus (strain Western Reserve) (VACV).